The primary structure comprises 788 residues: Ribonucleoside-diphosphate reductase subunit alpha (788 aa).

One can recognise an ATP-cone domain in the interval 2–92; the sequence is ITVVKRNGRI…LYDLYHKVSG (91 aa). ATP-binding positions include K6, 12 to 18, and T52; that span reads EPLDITK. T200 provides a ligand contact to GDP. A disulfide bridge connects residues C216 and C497. Residues 223–225 and R253 each bind dTTP; that span reads DNI. Residue N424 participates in GDP binding. N424 functions as the Proton acceptor in the catalytic mechanism. C426 (cysteine radical intermediate) is an active-site residue. GDP is bound by residues E428 and 661 to 663; that span reads SSI. E428 (proton acceptor) is an active-site residue.

This sequence belongs to the ribonucleoside diphosphate reductase large chain family. Tetramer of two alpha and two beta subunits.

It catalyses the reaction a 2'-deoxyribonucleoside 5'-diphosphate + [thioredoxin]-disulfide + H2O = a ribonucleoside 5'-diphosphate + [thioredoxin]-dithiol. Its activity is regulated as follows. Under complex allosteric control mediated by deoxynucleoside triphosphates and ATP binding to separate specificity and activation sites on the alpha subunit. The type of nucleotide bound at the specificity site determines substrate preference. It seems probable that ATP makes the enzyme reduce CDP and UDP, dGTP favors ADP reduction and dTTP favors GDP reduction. Stimulated by ATP and inhibited by dATP binding to the activity site. In terms of biological role, provides the precursors necessary for DNA synthesis. Catalyzes the biosynthesis of deoxyribonucleotides from the corresponding ribonucleotides. This chain is Ribonucleoside-diphosphate reductase subunit alpha (nrdA), found in Helicobacter pylori (strain J99 / ATCC 700824) (Campylobacter pylori J99).